The sequence spans 102 residues: MKTIPLEAFLTVSMILFGLGLIGIIARRNLVTVLMSLELALNAVNIALVGADHYLGLAEGQIFALFIIALAATEAAVGLGIIIAIFRLKKVESTDEIRELRG.

The next 3 membrane-spanning stretches (helical) occupy residues Leu6–Ala26, Leu30–Gly50, and Phe66–Phe86.

This sequence belongs to the complex I subunit 4L family. As to quaternary structure, NDH-1 is composed of 14 different subunits. Subunits NuoA, H, J, K, L, M, N constitute the membrane sector of the complex.

The protein resides in the cell inner membrane. The catalysed reaction is a quinone + NADH + 5 H(+)(in) = a quinol + NAD(+) + 4 H(+)(out). Its function is as follows. NDH-1 shuttles electrons from NADH, via FMN and iron-sulfur (Fe-S) centers, to quinones in the respiratory chain. The immediate electron acceptor for the enzyme in this species is believed to be ubiquinone. Couples the redox reaction to proton translocation (for every two electrons transferred, four hydrogen ions are translocated across the cytoplasmic membrane), and thus conserves the redox energy in a proton gradient. The sequence is that of NADH-quinone oxidoreductase subunit K 2 from Aquifex aeolicus (strain VF5).